The chain runs to 111 residues: uncharacterized protein (111 aa).

The interval 66–94 (PVPTATPSLPRSGFTSSAKKIKESRKQKS) is disordered. A compositionally biased stretch (polar residues) spans 70-83 (ATPSLPRSGFTSSA).

The protein localises to the plastid. Its subcellular location is the chloroplast. This is an uncharacterized protein from Chlamydomonas reinhardtii (Chlamydomonas smithii).